The primary structure comprises 671 residues: Anaphase-promoting complex subunit cut9 (671 aa).

The segment at 1-24 (MVVKRTQTDSRMQSTPGNHNHPDA) is disordered. TPR repeat units lie at residues 83–114 (REDY…LDIT), 117–142 (PNDA…LLTK), 150–173 (SACR…LNLL), 198–229 (LEAS…ALMV), 234–257 (YEAF…LVLK), 268–296 (AAFL…DYLS), 306–334 (DLLL…ILEI), 341–368 (VYPL…LVDR), 373–402 (AVTW…SSTM), 407–435 (GPAW…TAAR), 442–470 (LPYL…SYAL), 475–507 (PLLL…LVKK), 513–545 (KPWA…GLLL), and 550–579 (ANVH…SLAI). The interval 622–643 (NLNTSDKSMSMEDQSGKVTESV) is disordered.

As to quaternary structure, the APC/C is composed of at least 13 subunits: apc1, apc2, nuc2, apc4, apc5, cut9, apc8, apc10, apc11, hcn1, apc13, apc14 and apc15. Homodimer. Interacts directly with nuc2 and hcn1. Post-translationally, phosphorylated.

Its subcellular location is the nucleus. Functionally, component of the anaphase-promoting complex/cyclosome (APC/C), a cell cycle-regulated E3 ubiquitin-protein ligase complex that controls progression through mitosis and the G1 phase of the cell cycle. The APC/C is thought to confer substrate specificity and, in the presence of ubiquitin-conjugating E2 enzymes, it catalyzes the formation of protein-ubiquitin conjugates that are subsequently degraded by the 26S proteasome. May play a pivotal role in the control of anaphase. The sequence is that of Anaphase-promoting complex subunit cut9 (cut9) from Schizosaccharomyces pombe (strain 972 / ATCC 24843) (Fission yeast).